The following is a 420-amino-acid chain: 3-isopropylmalate dehydratase large subunit (420 aa).

Residues Cys-300, Cys-360, and Cys-363 each coordinate [4Fe-4S] cluster.

The protein belongs to the aconitase/IPM isomerase family. LeuC type 2 subfamily. In terms of assembly, heterodimer of LeuC and LeuD. [4Fe-4S] cluster is required as a cofactor.

It carries out the reaction (2R,3S)-3-isopropylmalate = (2S)-2-isopropylmalate. The protein operates within amino-acid biosynthesis; L-leucine biosynthesis; L-leucine from 3-methyl-2-oxobutanoate: step 2/4. Catalyzes the isomerization between 2-isopropylmalate and 3-isopropylmalate, via the formation of 2-isopropylmaleate. This Helicobacter hepaticus (strain ATCC 51449 / 3B1) protein is 3-isopropylmalate dehydratase large subunit.